Consider the following 343-residue polypeptide: Methylthioribose-1-phosphate isomerase (343 aa).

Substrate contacts are provided by residues 48–50 (RGA), Arg-88, and Gln-193. Asp-234 (proton donor) is an active-site residue. 244–245 (NK) contacts substrate.

It belongs to the eIF-2B alpha/beta/delta subunits family. MtnA subfamily.

It catalyses the reaction 5-(methylsulfanyl)-alpha-D-ribose 1-phosphate = 5-(methylsulfanyl)-D-ribulose 1-phosphate. It functions in the pathway amino-acid biosynthesis; L-methionine biosynthesis via salvage pathway; L-methionine from S-methyl-5-thio-alpha-D-ribose 1-phosphate: step 1/6. In terms of biological role, catalyzes the interconversion of methylthioribose-1-phosphate (MTR-1-P) into methylthioribulose-1-phosphate (MTRu-1-P). This is Methylthioribose-1-phosphate isomerase from Thermotoga petrophila (strain ATCC BAA-488 / DSM 13995 / JCM 10881 / RKU-1).